We begin with the raw amino-acid sequence, 324 residues long: MEGRDMLSWEQKTLLSELINGFDAAKKLQARLREAPSPSSSFSSPATAVAETNEILVKQIVSSYERSLLLLNWSSSPSVQLIPTPVTVVPVANPGSVPESPASINGSPRSEEFADGGGSSESHHRQDYIFNSKKRKMLPKWSEKVRISPERGLEGPQDDVFSWRKYGQKDILGAKFPRSYYRCTHRSTQNCWATKQVQRSDGDATVFEVTYRGTHTCSQAITRTPPLASPEKRQDTRVKPAITQKPKDILESLKSNLTVRTDGLDDGKDVFSFPDTPPFYNYGTINGEFGHVESSPIFDVVDWFNPTVEIDTTFPAFLHESIYY.

The tract at residues 93 to 126 is disordered; sequence NPGSVPESPASINGSPRSEEFADGGGSSESHHRQ. The segment at residues 152–220 is a DNA-binding region (WRKY); it reads GLEGPQDDVF…YRGTHTCSQA (69 aa).

It belongs to the WRKY group III family. Interacts with ESR/ESP and UPL5. Binds to WRKY30. In terms of processing, ubiquitinated by UPL5. Ubiquitination leads to its subsequent degradation, thus controlling the timing of leaf senescence.

It localises to the nucleus. In terms of biological role, transcription factor. Interacts specifically with the W box (5'-(T)TGAC[CT]-3'), a frequently occurring elicitor-responsive cis-acting element. May regulate the early events of leaf senescence. Negatively regulates the expression of ESR/ESP. Together with WRKY46 and WRKY70, promotes resistance to P.syringae, probably by enhancing salicylic acid (SA)- dependent genes. Contributes to the suppression of jasmonic acid (MeJA)-induced expression of PDF1.2. This is Probable WRKY transcription factor 53 from Arabidopsis thaliana (Mouse-ear cress).